The following is a 239-amino-acid chain: mRNA turnover protein 4 homolog (239 aa).

The tract at residues 216–239 (QQMDDDLPESAPESEGESEEEDDS) is disordered. Positions 218 to 239 (MDDDLPESAPESEGESEEEDDS) are enriched in acidic residues. A phosphoserine mark is found at Ser225, Ser229, and Ser233.

This sequence belongs to the universal ribosomal protein uL10 family. Associates with the pre-60S ribosomal particle. Interacts with MINAS-60 (product of an alternative open reading frame of RBM10).

Its subcellular location is the nucleus. The protein resides in the nucleolus. The protein localises to the cytoplasm. In terms of biological role, component of the ribosome assembly machinery. Nuclear paralog of the ribosomal protein P0, it binds pre-60S subunits at an early stage of assembly in the nucleolus, and is replaced by P0 in cytoplasmic pre-60S subunits and mature 80S ribosomes. The sequence is that of mRNA turnover protein 4 homolog (Mrto4) from Mus musculus (Mouse).